The following is a 276-amino-acid chain: Outer membrane lipoprotein 2 (276 aa).

The first 19 residues, 1–19 (MNFKKLLGVALVSALALTA), serve as a signal peptide directing secretion. Cys20 carries N-palmitoyl cysteine lipidation. Residue Cys20 is the site of S-diacylglycerol cysteine attachment.

Belongs to the NlpA lipoprotein family.

It is found in the cell outer membrane. The sequence is that of Outer membrane lipoprotein 2 (plpB) from Mannheimia haemolytica (Pasteurella haemolytica).